A 357-amino-acid polypeptide reads, in one-letter code: Probable cinnamyl alcohol dehydrogenase (357 aa).

Cysteine 47 is a binding site for Zn(2+). Serine 49 contributes to the NADP(+) binding site. Histidine 69, glutamate 70, cysteine 100, cysteine 103, cysteine 106, cysteine 114, and cysteine 163 together coordinate Zn(2+). NADP(+)-binding positions include threonine 167, 188–193, 211–216, threonine 251, glycine 275, and 298–300; these read GLGGVG, SSSDKK, and SFI.

The protein belongs to the zinc-containing alcohol dehydrogenase family. Homodimer. Zn(2+) is required as a cofactor.

The catalysed reaction is (E)-cinnamyl alcohol + NADP(+) = (E)-cinnamaldehyde + NADPH + H(+). The enzyme catalyses (E)-coniferol + NADP(+) = (E)-coniferaldehyde + NADPH + H(+). It carries out the reaction (E)-sinapyl alcohol + NADP(+) = (E)-sinapaldehyde + NADPH + H(+). It catalyses the reaction (E)-4-coumaroyl alcohol + NADP(+) = (E)-4-coumaraldehyde + NADPH + H(+). The catalysed reaction is (E)-caffeyl alcohol + NADP(+) = (E)-caffeyl aldehyde + NADPH + H(+). It functions in the pathway aromatic compound metabolism; phenylpropanoid biosynthesis. Functionally, involved in lignin biosynthesis. Catalyzes the final step specific for the production of lignin monomers. Catalyzes the NADPH-dependent reduction of coniferaldehyde, 5-hydroxyconiferaldehyde, sinapaldehyde, 4-coumaraldehyde and caffeyl aldehyde to their respective alcohols. The protein is Probable cinnamyl alcohol dehydrogenase (CAD) of Pinus radiata (Monterey pine).